Consider the following 89-residue polypeptide: Probable Fe(2+)-trafficking protein (89 aa).

It belongs to the Fe(2+)-trafficking protein family.

Its function is as follows. Could be a mediator in iron transactions between iron acquisition and iron-requiring processes, such as synthesis and/or repair of Fe-S clusters in biosynthetic enzymes. The protein is Probable Fe(2+)-trafficking protein of Stenotrophomonas maltophilia (strain K279a).